We begin with the raw amino-acid sequence, 191 residues long: MAPNVALADSMHNYQPKPGKRNQEASELRKTLKPLMEKRRRARINESLNQLKTLILPLIGKDNSRYSKLEKADILEMTVRFLRDIPPVQAQNQADRYKEGYRACVERLSAILGKSHVLTGEASNRLLEYLQRSPELCSSDCNHPPKPQRPRIVLQVSPRTSQFGSPLQNQPSSHRPAPCPPQLNSSIWRPW.

The segment at 1–26 (MAPNVALADSMHNYQPKPGKRNQEAS) is disordered. The 58-residue stretch at 28–85 (LRKTLKPLMEKRRRARINESLNQLKTLILPLIGKDNSRYSKLEKADILEMTVRFLRDI) folds into the bHLH domain. The 34-residue stretch at 97–130 (YKEGYRACVERLSAILGKSHVLTGEASNRLLEYL) folds into the Orange domain. Composition is skewed to polar residues over residues 159–173 (RTSQ…QPSS) and 182–191 (QLNSSIWRPW). The interval 159 to 191 (RTSQFGSPLQNQPSSHRPAPCPPQLNSSIWRPW) is disordered. Positions 188-191 (WRPW) match the WRPW motif motif.

As to quaternary structure, transcription repression requires formation of a complex with a corepressor protein of the Groucho/TLE family. Homodimer, and heterodimer with the other bHLH proteins neurod1, neurod4/ath3, hes1/hairy1 and hes6r. Weakly interacts with the bHLH protein hey1/hrt1. As to expression, expressed in the animal half of the early cleavage stage embryo. During neurulation and organogenesis, the otic vesicles and retina are the main sites of expression; expression in otic placodes begins as early as stage 13.5, persisting in the otic vesicles at stage 30 and beyond. Also transiently expressed in the olfactory placodes. In addition, weakly expressed in primary neurons. Expression in the retina begins at stage 21, and is seen throughout the neural retina by stage 30. From stage 35 onwards, expression progressively declines in the central retina, while remaining high in the margins. At stage 41, expression becomes restricted to the ciliary marginal zone (CMZ) of the retina, the only region where retinogenesis is still occurring.

It is found in the nucleus. In terms of biological role, transcriptional repressor. Essential in the retina to govern glial versus neuronal differentiation. Promotes gliogenesis through the inhibition of neuronal differentiation by at least two distinct mechanisms; represses proneural gene transcription, and also physically interacts with proneural proteins, including neurod1. This chain is Transcription factor HES-2 (hes2), found in Xenopus laevis (African clawed frog).